We begin with the raw amino-acid sequence, 147 residues long: Putative nickel-responsive regulator (147 aa).

The Ni(2+) site is built by histidine 76, histidine 87, histidine 89, and cysteine 95.

It belongs to the transcriptional regulatory CopG/NikR family. Ni(2+) is required as a cofactor.

Its function is as follows. Transcriptional regulator. The polypeptide is Putative nickel-responsive regulator (Rhodopseudomonas palustris (strain TIE-1)).